We begin with the raw amino-acid sequence, 376 residues long: Chaperone protein DnaJ (376 aa).

One can recognise a J domain in the interval 5–70 (DYYEVLGVAR…NKRRAYDAHG (66 aa)). The segment at 132–209 (GIERRIEIPT…CHGAGRVEEN (78 aa)) adopts a CR-type zinc-finger fold. Zn(2+)-binding residues include C145, C148, C161, C164, C183, C186, C197, and C200. CXXCXGXG motif repeat units follow at residues 145-152 (CVSCHGSG), 161-168 (CGTCHGRG), 183-190 (CPHCDGRG), and 197-204 (CKTCHGAG).

It belongs to the DnaJ family. Homodimer. The cofactor is Zn(2+).

Its subcellular location is the cytoplasm. Functionally, participates actively in the response to hyperosmotic and heat shock by preventing the aggregation of stress-denatured proteins and by disaggregating proteins, also in an autonomous, DnaK-independent fashion. Unfolded proteins bind initially to DnaJ; upon interaction with the DnaJ-bound protein, DnaK hydrolyzes its bound ATP, resulting in the formation of a stable complex. GrpE releases ADP from DnaK; ATP binding to DnaK triggers the release of the substrate protein, thus completing the reaction cycle. Several rounds of ATP-dependent interactions between DnaJ, DnaK and GrpE are required for fully efficient folding. Also involved, together with DnaK and GrpE, in the DNA replication of plasmids through activation of initiation proteins. The protein is Chaperone protein DnaJ of Xanthomonas oryzae pv. oryzae (strain PXO99A).